The chain runs to 130 residues: Small ribosomal subunit protein uS11c (130 aa).

This sequence belongs to the universal ribosomal protein uS11 family. In terms of assembly, part of the 30S ribosomal subunit.

It is found in the plastid. The protein resides in the chloroplast. The polypeptide is Small ribosomal subunit protein uS11c (Chaetosphaeridium globosum (Charophycean green alga)).